We begin with the raw amino-acid sequence, 462 residues long: beta-Tubulin at 65B (462 aa).

Positions 70, 137, 141, 142, 143, 203, and 225 each coordinate GTP. Mg(2+) is bound at residue Glu-70. The disordered stretch occupies residues 420-462 (DYRSSAEGEDSGGGGGGGGGRSGSAESGEEEATPEAHCQYCTE). The segment covering 430-441 (SGGGGGGGGGRS) has biased composition (gly residues).

The protein belongs to the tubulin family. Dimer of alpha and beta chains. A typical microtubule is a hollow water-filled tube with an outer diameter of 25 nm and an inner diameter of 15 nM. Alpha-beta heterodimers associate head-to-tail to form protofilaments running lengthwise along the microtubule wall with the beta-tubulin subunit facing the microtubule plus end conferring a structural polarity. Microtubules usually have 13 protofilaments but different protofilament numbers can be found in some organisms and specialized cells. Mg(2+) is required as a cofactor.

The protein resides in the cytoplasm. The protein localises to the cytoskeleton. In terms of biological role, tubulin is the major constituent of microtubules, a cylinder consisting of laterally associated linear protofilaments composed of alpha- and beta-tubulin heterodimers. Microtubules grow by the addition of GTP-tubulin dimers to the microtubule end, where a stabilizing cap forms. Below the cap, tubulin dimers are in GDP-bound state, owing to GTPase activity of alpha-tubulin. This is beta-Tubulin at 65B from Drosophila melanogaster (Fruit fly).